A 376-amino-acid chain; its full sequence is tRNA-specific 2-thiouridylase MnmA (376 aa).

ATP contacts are provided by residues 17–24 and methionine 43; that span reads GMSGGVDS. Residues 103 to 105 form an interaction with target base in tRNA region; sequence NPD. The Nucleophile role is filled by cysteine 108. Cysteine 108 and cysteine 204 form a disulfide bridge. Glycine 132 lines the ATP pocket. The interaction with tRNA stretch occupies residues 154 to 156; the sequence is KDQ. The active-site Cysteine persulfide intermediate is cysteine 204. The interval 316–317 is interaction with tRNA; it reads RY.

The protein belongs to the MnmA/TRMU family.

It is found in the cytoplasm. It carries out the reaction S-sulfanyl-L-cysteinyl-[protein] + uridine(34) in tRNA + AH2 + ATP = 2-thiouridine(34) in tRNA + L-cysteinyl-[protein] + A + AMP + diphosphate + H(+). In terms of biological role, catalyzes the 2-thiolation of uridine at the wobble position (U34) of tRNA, leading to the formation of s(2)U34. The sequence is that of tRNA-specific 2-thiouridylase MnmA from Pseudomonas syringae pv. syringae (strain B728a).